A 352-amino-acid polypeptide reads, in one-letter code: 4-hydroxy-3-methylbut-2-enyl diphosphate reductase (352 aa).

Position 36 (C36) interacts with [4Fe-4S] cluster. The (2E)-4-hydroxy-3-methylbut-2-enyl diphosphate site is built by H76 and H114. 2 residues coordinate dimethylallyl diphosphate: H76 and H114. 2 residues coordinate isopentenyl diphosphate: H76 and H114. Residue C136 coordinates [4Fe-4S] cluster. H164 serves as a coordination point for (2E)-4-hydroxy-3-methylbut-2-enyl diphosphate. A dimethylallyl diphosphate-binding site is contributed by H164. H164 contacts isopentenyl diphosphate. The Proton donor role is filled by E166. A (2E)-4-hydroxy-3-methylbut-2-enyl diphosphate-binding site is contributed by T204. C234 provides a ligand contact to [4Fe-4S] cluster. The (2E)-4-hydroxy-3-methylbut-2-enyl diphosphate site is built by S262, S263, N264, and S309. Dimethylallyl diphosphate-binding residues include S262, S263, N264, and S309. Isopentenyl diphosphate-binding residues include S262, S263, N264, and S309.

This sequence belongs to the IspH family. [4Fe-4S] cluster serves as cofactor.

The catalysed reaction is isopentenyl diphosphate + 2 oxidized [2Fe-2S]-[ferredoxin] + H2O = (2E)-4-hydroxy-3-methylbut-2-enyl diphosphate + 2 reduced [2Fe-2S]-[ferredoxin] + 2 H(+). It catalyses the reaction dimethylallyl diphosphate + 2 oxidized [2Fe-2S]-[ferredoxin] + H2O = (2E)-4-hydroxy-3-methylbut-2-enyl diphosphate + 2 reduced [2Fe-2S]-[ferredoxin] + 2 H(+). It participates in isoprenoid biosynthesis; dimethylallyl diphosphate biosynthesis; dimethylallyl diphosphate from (2E)-4-hydroxy-3-methylbutenyl diphosphate: step 1/1. Its pathway is isoprenoid biosynthesis; isopentenyl diphosphate biosynthesis via DXP pathway; isopentenyl diphosphate from 1-deoxy-D-xylulose 5-phosphate: step 6/6. Catalyzes the conversion of 1-hydroxy-2-methyl-2-(E)-butenyl 4-diphosphate (HMBPP) into a mixture of isopentenyl diphosphate (IPP) and dimethylallyl diphosphate (DMAPP). Acts in the terminal step of the DOXP/MEP pathway for isoprenoid precursor biosynthesis. The sequence is that of 4-hydroxy-3-methylbut-2-enyl diphosphate reductase from Bifidobacterium longum (strain NCC 2705).